The primary structure comprises 193 residues: ATP-dependent Clp protease proteolytic subunit 1 (193 aa).

The active-site Nucleophile is Ser-99. Residue His-124 is part of the active site.

The protein belongs to the peptidase S14 family. Fourteen ClpP subunits assemble into 2 heptameric rings which stack back to back to give a disk-like structure with a central cavity, resembling the structure of eukaryotic proteasomes.

Its subcellular location is the cytoplasm. The catalysed reaction is Hydrolysis of proteins to small peptides in the presence of ATP and magnesium. alpha-casein is the usual test substrate. In the absence of ATP, only oligopeptides shorter than five residues are hydrolyzed (such as succinyl-Leu-Tyr-|-NHMec, and Leu-Tyr-Leu-|-Tyr-Trp, in which cleavage of the -Tyr-|-Leu- and -Tyr-|-Trp bonds also occurs).. Its function is as follows. Cleaves peptides in various proteins in a process that requires ATP hydrolysis. Has a chymotrypsin-like activity. Plays a major role in the degradation of misfolded proteins. The sequence is that of ATP-dependent Clp protease proteolytic subunit 1 from Shouchella clausii (strain KSM-K16) (Alkalihalobacillus clausii).